The following is a 379-amino-acid chain: Probable purine permease 11 (379 aa).

10 helical membrane-spanning segments follow: residues 43–63, 76–96, 114–134, 144–164, 167–187, 203–223, 239–259, 294–313, 314–330, and 334–354; these read WVLVSVNIFFLIGGQAASVLL, WMATLVQTAAFPILYIPLLLL, IVLIYVLLGVIIAGDNMLYSV, YSLICATQLAFNAVFSYFINA, FTALILNSVVLLSFSAALIAL, IVGFVCTLAASALYSLLLSLM, VLEMQIYTSLVATCVSVIGLF, VCSVGVVGLIFLVTSLFSNV, ISTLSLAVTPLAALVVF, and MSGVKIMAMLIAIWGFASYVY.

Belongs to the purine permeases (TC 2.A.7.14) family. As to quaternary structure, may form a complex with the potassium channel subunit KAT1.

The protein resides in the membrane. This Arabidopsis thaliana (Mouse-ear cress) protein is Probable purine permease 11 (PUP11).